The chain runs to 110 residues: Small ribosomal subunit protein bS16 (110 aa).

The interval 79–110 (AAGVKKREARNNPQKAVPRKERKAQAEAAAKG) is disordered.

It belongs to the bacterial ribosomal protein bS16 family.

In Bradyrhizobium diazoefficiens (strain JCM 10833 / BCRC 13528 / IAM 13628 / NBRC 14792 / USDA 110), this protein is Small ribosomal subunit protein bS16.